The following is a 612-amino-acid chain: Protein hinderin (612 aa).

S20 carries the phosphoserine modification. The stretch at 90-166 (LKDLCLEDKR…CQELLSLYQK (77 aa)) forms a coiled coil. S178 is subject to Phosphoserine. A coiled-coil region spans residues 362-406 (IEKQLSEDRRQQLMLQKMELEIEKERLQHLLAQQETKLLLKQQQL). Over residues 462 to 477 (STSFKKCPDSPNSGQN) the composition is skewed to polar residues. Disordered regions lie at residues 462–484 (STSFKKCPDSPNSGQNQREKKTV) and 509–598 (ETVT…RSPE). 3 positions are modified to phosphoserine: S471, S527, and S558. 2 stretches are compositionally biased toward polar residues: residues 555–568 (QSLSPNSAPKSQPH) and 575–585 (TWSTLRPTPQK).

Interacts (via N- and C-terminal domains) with SMC3 (via central hinge region).

Its function is as follows. Competes with SMC1 for binding to SMC3. May affect the availability of SMC3 to engage in the formation of multimeric protein complexes. This chain is Protein hinderin (Kiaa1328), found in Mus musculus (Mouse).